We begin with the raw amino-acid sequence, 409 residues long: Arginine deiminase (409 aa).

C398 functions as the Amidino-cysteine intermediate in the catalytic mechanism.

It belongs to the arginine deiminase family.

The protein resides in the cytoplasm. The enzyme catalyses L-arginine + H2O = L-citrulline + NH4(+). It participates in amino-acid degradation; L-arginine degradation via ADI pathway; carbamoyl phosphate from L-arginine: step 1/2. The chain is Arginine deiminase from Metamycoplasma arthritidis (strain 158L3-1) (Mycoplasma arthritidis).